Reading from the N-terminus, the 338-residue chain is uncharacterized protein (338 aa).

The tract at residues 1-72 (MASPPILSRE…LNPVEDYDSK (72 aa)) is disordered. Residues 24-38 (GGNSEVNIDPSASSS) are compositionally biased toward polar residues. Over residues 49-58 (ADTKIDPHLL) the composition is skewed to basic and acidic residues. Residues 59–68 (EEDDLNPVED) are compositionally biased toward acidic residues.

The protein resides in the cytoplasm. It localises to the nucleus. This is an uncharacterized protein from Schizosaccharomyces pombe (strain 972 / ATCC 24843) (Fission yeast).